We begin with the raw amino-acid sequence, 671 residues long: DNA ligase (671 aa).

NAD(+) is bound by residues 36–40 (DAEYD), 85–86 (SL), and Glu116. Residue Lys118 is the N6-AMP-lysine intermediate of the active site. Positions 139, 176, 292, and 316 each coordinate NAD(+). The Zn(2+) site is built by Cys410, Cys413, Cys428, and Cys434. Residues 591–671 (QKGGRFQGMT…QFLAMFSEKE (81 aa)) form the BRCT domain.

This sequence belongs to the NAD-dependent DNA ligase family. LigA subfamily. The cofactor is Mg(2+). Mn(2+) serves as cofactor.

The enzyme catalyses NAD(+) + (deoxyribonucleotide)n-3'-hydroxyl + 5'-phospho-(deoxyribonucleotide)m = (deoxyribonucleotide)n+m + AMP + beta-nicotinamide D-nucleotide.. In terms of biological role, DNA ligase that catalyzes the formation of phosphodiester linkages between 5'-phosphoryl and 3'-hydroxyl groups in double-stranded DNA using NAD as a coenzyme and as the energy source for the reaction. It is essential for DNA replication and repair of damaged DNA. This is DNA ligase from Acidithiobacillus ferrooxidans (strain ATCC 23270 / DSM 14882 / CIP 104768 / NCIMB 8455) (Ferrobacillus ferrooxidans (strain ATCC 23270)).